A 378-amino-acid chain; its full sequence is Lipid-A-disaccharide synthase (378 aa).

Belongs to the LpxB family.

The catalysed reaction is a lipid X + a UDP-2-N,3-O-bis[(3R)-3-hydroxyacyl]-alpha-D-glucosamine = a lipid A disaccharide + UDP + H(+). It functions in the pathway bacterial outer membrane biogenesis; LPS lipid A biosynthesis. Functionally, condensation of UDP-2,3-diacylglucosamine and 2,3-diacylglucosamine-1-phosphate to form lipid A disaccharide, a precursor of lipid A, a phosphorylated glycolipid that anchors the lipopolysaccharide to the outer membrane of the cell. This chain is Lipid-A-disaccharide synthase, found in Methylobacillus flagellatus (strain ATCC 51484 / DSM 6875 / VKM B-1610 / KT).